The following is a 173-amino-acid chain: HAM34 protein (173 aa).

A compositionally biased stretch (low complexity) spans 22-89 (AAPATTPDTA…ADGTQTATAP (68 aa)). The segment at 22 to 155 (AAPATTPDTA…ATDTTSGASH (134 aa)) is disordered. The span at 95-133 (TEESSASGEMTPTVGTDTSDQVSDSTAAGPSTPEGSMTG) shows a compositional bias: polar residues. Residues 134-155 (TSTPKASDSSSSATDTTSGASH) show a composition bias toward low complexity.

Germinating spores.

Its function is as follows. Could be a structural protein required for the infection process of B.lactucae. The sequence is that of HAM34 protein (HAM34) from Bremia lactucae (Lettuce downy mildew).